Reading from the N-terminus, the 289-residue chain is Phycobilisome 39 kDa linker polypeptide, phycocyanin-associated, rod (289 aa).

Residues 2-180 (PITSAASRLG…LYRGYANSDR (179 aa)) form the PBS-linker domain. The disordered stretch occupies residues 213 to 233 (SYLPSKQGTAPSRTFGRSSQG). A compositionally biased stretch (polar residues) spans 216-233 (PSKQGTAPSRTFGRSSQG). One can recognise a CpcD-like domain in the interval 236–288 (PRLYRIEVTGISLPRYPKVRRSNKEFIVPYEQLSSTLQQINKLGGKVASITFA).

Belongs to the phycobilisome linker protein family.

It localises to the cellular thylakoid membrane. Its function is as follows. Rod linker protein, associated with phycocyanin. Linker polypeptides determine the state of aggregation and the location of the disk-shaped phycobiliprotein units within the phycobilisome and modulate their spectroscopic properties in order to mediate a directed and optimal energy transfer. This Microchaete diplosiphon (Fremyella diplosiphon) protein is Phycobilisome 39 kDa linker polypeptide, phycocyanin-associated, rod (cpcI2).